A 109-amino-acid polypeptide reads, in one-letter code: Large ribosomal subunit protein uL22 (109 aa).

This sequence belongs to the universal ribosomal protein uL22 family. Part of the 50S ribosomal subunit.

Functionally, this protein binds specifically to 23S rRNA; its binding is stimulated by other ribosomal proteins, e.g. L4, L17, and L20. It is important during the early stages of 50S assembly. It makes multiple contacts with different domains of the 23S rRNA in the assembled 50S subunit and ribosome. In terms of biological role, the globular domain of the protein is located near the polypeptide exit tunnel on the outside of the subunit, while an extended beta-hairpin is found that lines the wall of the exit tunnel in the center of the 70S ribosome. This chain is Large ribosomal subunit protein uL22, found in Blochmanniella pennsylvanica (strain BPEN).